Here is a 374-residue protein sequence, read N- to C-terminus: Putative F-box protein At5g60060 (374 aa).

Residues 9–61 enclose the F-box domain; the sequence is SQWSDLPLDILELISDRLDHDSSDTIHLLCLRSVCATWRLSLPLSNKNNRLSK.

This Arabidopsis thaliana (Mouse-ear cress) protein is Putative F-box protein At5g60060.